Here is a 279-residue protein sequence, read N- to C-terminus: F420-dependent methylenetetrahydromethanopterin dehydrogenase (279 aa).

Belongs to the MTD family.

The enzyme catalyses 5,10-methylenetetrahydromethanopterin + oxidized coenzyme F420-(gamma-L-Glu)(n) + 2 H(+) = 5,10-methenyl-5,6,7,8-tetrahydromethanopterin + reduced coenzyme F420-(gamma-L-Glu)(n). The protein operates within one-carbon metabolism; methanogenesis from CO(2); 5,10-methylene-5,6,7,8-tetrahydromethanopterin from 5,10-methenyl-5,6,7,8-tetrahydromethanopterin (coenzyme F420 route): step 1/1. In terms of biological role, catalyzes the reversible reduction of methenyl-H(4)MPT(+) to methylene-H(4)MPT. In Methanosarcina mazei (strain ATCC BAA-159 / DSM 3647 / Goe1 / Go1 / JCM 11833 / OCM 88) (Methanosarcina frisia), this protein is F420-dependent methylenetetrahydromethanopterin dehydrogenase (mtd).